The chain runs to 253 residues: Ubiquinone biosynthesis O-methyltransferase (253 aa).

4 residues coordinate S-adenosyl-L-methionine: Arg47, Gly78, Asp99, and Met141.

This sequence belongs to the methyltransferase superfamily. UbiG/COQ3 family.

It carries out the reaction a 3-demethylubiquinol + S-adenosyl-L-methionine = a ubiquinol + S-adenosyl-L-homocysteine + H(+). It catalyses the reaction a 3-(all-trans-polyprenyl)benzene-1,2-diol + S-adenosyl-L-methionine = a 2-methoxy-6-(all-trans-polyprenyl)phenol + S-adenosyl-L-homocysteine + H(+). Its pathway is cofactor biosynthesis; ubiquinone biosynthesis. In terms of biological role, O-methyltransferase that catalyzes the 2 O-methylation steps in the ubiquinone biosynthetic pathway. In Rhodopseudomonas palustris (strain BisA53), this protein is Ubiquinone biosynthesis O-methyltransferase.